The chain runs to 105 residues: Urease subunit gamma (105 aa).

This sequence belongs to the urease gamma subunit family. In terms of assembly, heterotrimer of UreA (gamma), UreB (beta) and UreC (alpha) subunits. Three heterotrimers associate to form the active enzyme.

The protein localises to the cytoplasm. The enzyme catalyses urea + 2 H2O + H(+) = hydrogencarbonate + 2 NH4(+). Its pathway is nitrogen metabolism; urea degradation; CO(2) and NH(3) from urea (urease route): step 1/1. The polypeptide is Urease subunit gamma (Bacillus subtilis (strain 168)).